We begin with the raw amino-acid sequence, 115 residues long: Non-specific lipid-transfer protein Cor a 8.0101 (115 aa).

An N-terminal signal peptide occupies residues 1–23; sequence MGSLKLVCAVLLCMMVAAPVARA. Disulfide bonds link cysteine 27-cysteine 74, cysteine 37-cysteine 51, cysteine 52-cysteine 97, and cysteine 72-cysteine 111.

This sequence belongs to the plant LTP family. As to quaternary structure, monomer. Expressed in seed (at protein level). Expressed in seed.

Its function is as follows. Plant non-specific lipid-transfer proteins transfer phospholipids as well as galactolipids across membranes. May play a role in wax or cutin deposition in the cell walls of expanding epidermal cells and certain secretory tissues. In Corylus avellana (European hazel), this protein is Non-specific lipid-transfer protein Cor a 8.0101.